Here is a 343-residue protein sequence, read N- to C-terminus: Uroporphyrinogen decarboxylase (343 aa).

Substrate-binding positions include 23 to 27 (RQAGR), Asp73, Tyr150, Ser205, and His322.

This sequence belongs to the uroporphyrinogen decarboxylase family. Homodimer.

The protein resides in the cytoplasm. It carries out the reaction uroporphyrinogen III + 4 H(+) = coproporphyrinogen III + 4 CO2. It participates in porphyrin-containing compound metabolism; protoporphyrin-IX biosynthesis; coproporphyrinogen-III from 5-aminolevulinate: step 4/4. Its function is as follows. Catalyzes the decarboxylation of four acetate groups of uroporphyrinogen-III to yield coproporphyrinogen-III. The chain is Uroporphyrinogen decarboxylase from Cereibacter sphaeroides (strain ATCC 17025 / ATH 2.4.3) (Rhodobacter sphaeroides).